The following is a 354-amino-acid chain: Protein RecA (354 aa).

ATP is bound at residue 68–75 (GPESSGKT).

The protein belongs to the RecA family.

It is found in the cytoplasm. Functionally, can catalyze the hydrolysis of ATP in the presence of single-stranded DNA, the ATP-dependent uptake of single-stranded DNA by duplex DNA, and the ATP-dependent hybridization of homologous single-stranded DNAs. It interacts with LexA causing its activation and leading to its autocatalytic cleavage. This chain is Protein RecA, found in Synechocystis sp. (strain ATCC 27184 / PCC 6803 / Kazusa).